Here is a 101-residue protein sequence, read N- to C-terminus: Urease subunit beta (101 aa).

The protein belongs to the urease beta subunit family. Heterotrimer of UreA (gamma), UreB (beta) and UreC (alpha) subunits. Three heterotrimers associate to form the active enzyme.

The protein localises to the cytoplasm. It catalyses the reaction urea + 2 H2O + H(+) = hydrogencarbonate + 2 NH4(+). It functions in the pathway nitrogen metabolism; urea degradation; CO(2) and NH(3) from urea (urease route): step 1/1. In Pseudomonas syringae pv. syringae (strain B728a), this protein is Urease subunit beta.